A 101-amino-acid chain; its full sequence is Large ribosomal subunit protein eL43 (101 aa).

Residues 40 to 62 (CPSCRSLVRLKRLAFGIWQCPKC) form a C4-type zinc finger.

It belongs to the eukaryotic ribosomal protein eL43 family. Zn(2+) is required as a cofactor.

In Pyrobaculum islandicum (strain DSM 4184 / JCM 9189 / GEO3), this protein is Large ribosomal subunit protein eL43.